Reading from the N-terminus, the 477-residue chain is Glutamate--tRNA ligase (477 aa).

The short motif at 12–22 is the 'HIGH' region element; it reads PSPTGMFHVGG. Zn(2+) is bound by residues cysteine 106, cysteine 108, cysteine 128, and aspartate 130. The short motif at 238-242 is the 'KMSKS' region element; sequence KLSKR. Lysine 241 provides a ligand contact to ATP.

It belongs to the class-I aminoacyl-tRNA synthetase family. Glutamate--tRNA ligase type 1 subfamily. As to quaternary structure, monomer. Zn(2+) is required as a cofactor.

The protein localises to the cytoplasm. It catalyses the reaction tRNA(Glu) + L-glutamate + ATP = L-glutamyl-tRNA(Glu) + AMP + diphosphate. Functionally, catalyzes the attachment of glutamate to tRNA(Glu) in a two-step reaction: glutamate is first activated by ATP to form Glu-AMP and then transferred to the acceptor end of tRNA(Glu). The polypeptide is Glutamate--tRNA ligase (Thermobifida fusca (strain YX)).